A 285-amino-acid chain; its full sequence is Meiotically up-regulated gene 74 protein (285 aa).

Its subcellular location is the cytoplasm. Has a role in meiosis. In Schizosaccharomyces pombe (strain 972 / ATCC 24843) (Fission yeast), this protein is Meiotically up-regulated gene 74 protein (mug74).